Consider the following 309-residue polypeptide: Probable manganese-dependent inorganic pyrophosphatase (309 aa).

Mn(2+) is bound by residues His-9, Asp-13, Asp-15, Asp-75, His-97, and Asp-149.

It belongs to the PPase class C family. Requires Mn(2+) as cofactor.

It is found in the cytoplasm. It catalyses the reaction diphosphate + H2O = 2 phosphate + H(+). The polypeptide is Probable manganese-dependent inorganic pyrophosphatase (Lactiplantibacillus plantarum (strain ATCC BAA-793 / NCIMB 8826 / WCFS1) (Lactobacillus plantarum)).